The primary structure comprises 157 residues: Cyclic pyranopterin monophosphate synthase (157 aa).

Substrate-binding positions include 74–76 and 112–113; these read MCH and ME. Asp127 is a catalytic residue.

It belongs to the MoaC family. Homohexamer; trimer of dimers.

The catalysed reaction is (8S)-3',8-cyclo-7,8-dihydroguanosine 5'-triphosphate = cyclic pyranopterin phosphate + diphosphate. It functions in the pathway cofactor biosynthesis; molybdopterin biosynthesis. Its function is as follows. Catalyzes the conversion of (8S)-3',8-cyclo-7,8-dihydroguanosine 5'-triphosphate to cyclic pyranopterin monophosphate (cPMP). In Campylobacter jejuni subsp. jejuni serotype O:23/36 (strain 81-176), this protein is Cyclic pyranopterin monophosphate synthase.